A 130-amino-acid chain; its full sequence is Sulfurtransferase TusD (130 aa).

Cys-80 functions as the Cysteine persulfide intermediate in the catalytic mechanism.

The protein belongs to the DsrE/TusD family. In terms of assembly, heterohexamer, formed by a dimer of trimers. The hexameric TusBCD complex contains 2 copies each of TusB, TusC and TusD. The TusBCD complex interacts with TusE.

The protein localises to the cytoplasm. Its function is as follows. Part of a sulfur-relay system required for 2-thiolation of 5-methylaminomethyl-2-thiouridine (mnm(5)s(2)U) at tRNA wobble positions. Accepts sulfur from TusA and transfers it in turn to TusE. The chain is Sulfurtransferase TusD from Sodalis glossinidius (strain morsitans).